An 87-amino-acid polypeptide reads, in one-letter code: Small ribosomal subunit protein bS20 (87 aa).

This sequence belongs to the bacterial ribosomal protein bS20 family.

Functionally, binds directly to 16S ribosomal RNA. In Brachyspira hyodysenteriae (strain ATCC 49526 / WA1), this protein is Small ribosomal subunit protein bS20.